The following is a 289-amino-acid chain: (3R)-3-[(carboxymethyl)amino]fatty acid oxygenase/decarboxylase (289 aa).

Tyr-65, Tyr-70, and Gly-93 together coordinate a (3R)-3-[(carboxymethyl)amino]fatty acid. Residues His-97 and Asp-99 each contribute to the Fe(2+) site. The a (3R)-3-[(carboxymethyl)amino]fatty acid site is built by Tyr-100 and Lys-158. His-260 lines the Fe(2+) pocket. 2-oxoglutarate is bound at residue His-264. An a (3R)-3-[(carboxymethyl)amino]fatty acid-binding site is contributed by Arg-275.

This sequence belongs to the TfdA dioxygenase family. The cofactor is Fe(2+).

It carries out the reaction a (3R)-3-[(carboxymethyl)amino]fatty acid + 2 2-oxoglutarate + 2 O2 = a (3R)-3-isocyanyl-fatty acid + 2 succinate + 3 CO2 + 2 H2O. It catalyses the reaction a (3R)-3-[(carboxymethyl)amino]fatty acid + 2-oxoglutarate + O2 = a (3R)-3-{[carboxy(hydroxy)methyl]amino}fatty acid + succinate + CO2. The catalysed reaction is a (3R)-3-{[carboxy(hydroxy)methyl]amino}fatty acid + 2-oxoglutarate + O2 = a (3R)-3-isocyanyl-fatty acid + succinate + 2 CO2 + 2 H2O. Its function is as follows. Involved in the biosynthesis of a unique class of isonitrile lipopeptides (INLPs) that seem to play a role in metal acquisition. Catalyzes the conversion of (3R)-3-[(carboxymethyl)amino]fatty acids to (3R)-3-isocyanyl-fatty acids through an oxidative decarboxylation mechanism, thereby generating the isonitrile group of INLPs. The sequence is that of (3R)-3-[(carboxymethyl)amino]fatty acid oxygenase/decarboxylase from Mycobacterium bovis (strain ATCC BAA-935 / AF2122/97).